Consider the following 620-residue polypeptide: Membrane protein insertase YidC (620 aa).

A run of 6 helical transmembrane segments spans residues 5-25 (QIIGISLISVLMLGYFGFMST), 343-363 (LGWPLVSWINRFVVIPVFDGL), 366-386 (VFSSFGLIIVILVLLIKLVLL), 436-456 (LSGCIPVLLQMPILLAMFNFF), 482-502 (LPFTIPFYGSHVSMFTLLMTI), and 529-549 (PVVFLFVLNSFPAGLSFYYFV).

This sequence belongs to the OXA1/ALB3/YidC family. Type 1 subfamily. Interacts with the Sec translocase complex via SecD. Specifically interacts with transmembrane segments of nascent integral membrane proteins during membrane integration.

Its subcellular location is the cell inner membrane. Functionally, required for the insertion and/or proper folding and/or complex formation of integral membrane proteins into the membrane. Involved in integration of membrane proteins that insert both dependently and independently of the Sec translocase complex, as well as at least some lipoproteins. Aids folding of multispanning membrane proteins. The protein is Membrane protein insertase YidC of Cytophaga hutchinsonii (strain ATCC 33406 / DSM 1761 / CIP 103989 / NBRC 15051 / NCIMB 9469 / D465).